A 481-amino-acid chain; its full sequence is UDP-N-acetylmuramate--L-alanine ligase (481 aa).

Position 122–128 (122–128) interacts with ATP; sequence GVHGKTT.

It belongs to the MurCDEF family.

Its subcellular location is the cytoplasm. The catalysed reaction is UDP-N-acetyl-alpha-D-muramate + L-alanine + ATP = UDP-N-acetyl-alpha-D-muramoyl-L-alanine + ADP + phosphate + H(+). Its pathway is cell wall biogenesis; peptidoglycan biosynthesis. In terms of biological role, cell wall formation. The polypeptide is UDP-N-acetylmuramate--L-alanine ligase (Treponema pallidum (strain Nichols)).